A 316-amino-acid chain; its full sequence is MRTIKIGSRASQLALVQAEIIINMLKEKFPQYTYEIIKITTLGDRILDKTLDKIGGKGLFVKEIQKALAEEKIDLAIHSMKDMPGETPEELVLGAITKREDPRDVLITRENKSLEELPKGAVIGSSSLRRQAQVMALRGDIKVVPIRGNVGTRLGKIETESLDGVILAAAGLNRLGLKEKISSYLEIEDFTPAVGQGALGCEARRKDIEMLEMLLAINHEETYRCVMAERAFLKLLEGGCHVPIGAYGQQQGQELHMTGMVASSDGRRVIKEQVMGDIADFQALGIQLGETLIEKGAKEILETVNTDNRIVNTEGS.

Cys-240 is modified (S-(dipyrrolylmethanemethyl)cysteine).

Belongs to the HMBS family. Monomer. Requires dipyrromethane as cofactor.

The enzyme catalyses 4 porphobilinogen + H2O = hydroxymethylbilane + 4 NH4(+). The protein operates within porphyrin-containing compound metabolism; protoporphyrin-IX biosynthesis; coproporphyrinogen-III from 5-aminolevulinate: step 2/4. Tetrapolymerization of the monopyrrole PBG into the hydroxymethylbilane pre-uroporphyrinogen in several discrete steps. In Alkaliphilus metalliredigens (strain QYMF), this protein is Porphobilinogen deaminase.